The following is a 422-amino-acid chain: DNA-directed RNA polymerase III subunit RPC4 (422 aa).

4 disordered regions span residues 1-80, 115-190, 219-244, and 318-350; these read MSSN…GQQR, KSEG…DDEE, IQEALSEKPTREPTPSVKTEPVGTGL, and RPAVKEEKEDMETQASDPSKKKKNIKKKDTKDA. The short motif at 25 to 29 is the Nuclear localization signal element; it reads KPSLK. The span at 28–37 shows a compositional bias: basic residues; it reads LKFKPKAVAR. The segment covering 38 to 64 has biased composition (basic and acidic residues); the sequence is KSKEEREAAASKVKLEEESKRGNDKKH. Residues S137 and S138 each carry the phosphoserine modification. Residues 138 to 148 are compositionally biased toward acidic residues; sequence SENEAEDDDNE. The span at 160–170 shows a compositional bias: basic and acidic residues; sequence MGKEFEARNLI. S178, S182, and S224 each carry phosphoserine. Over residues 219–229 the composition is skewed to basic and acidic residues; the sequence is IQEALSEKPTR. 2 positions are modified to phosphothreonine: T228 and T232.

This sequence belongs to the eukaryotic RPC4/POLR3D RNA polymerase subunit family. Component of the RNA polymerase III (Pol III) complex consisting of 17 subunits. Interacts with RPC37/RPC5. RPC53/RPC4, RPC37/RPC5 and RPC11/RPC10 probably form a Pol III subcomplex.

It localises to the nucleus. Its function is as follows. DNA-dependent RNA polymerase catalyzes the transcription of DNA into RNA using the four ribonucleoside triphosphates as substrates. Specific peripheric component of RNA polymerase III which synthesizes small RNAs, such as 5S rRNA and tRNAs. Essential for tRNA synthesis. The RPC53/RPC4-RPC37/RPC5 subcomplex is required for terminator recognition and reinitiation. The sequence is that of DNA-directed RNA polymerase III subunit RPC4 (RPC53) from Saccharomyces cerevisiae (strain ATCC 204508 / S288c) (Baker's yeast).